The primary structure comprises 253 residues: Phycoerythrobilin:ferredoxin oxidoreductase (253 aa).

Belongs to the HY2 family.

The enzyme catalyses (3Z)-phycoerythrobilin + oxidized 2[4Fe-4S]-[ferredoxin] = 15,16-dihydrobiliverdin + reduced 2[4Fe-4S]-[ferredoxin] + 2 H(+). In terms of biological role, catalyzes the two-electron reduction of the C2 and C3(1) diene system of 15,16-dihydrobiliverdin. The polypeptide is Phycoerythrobilin:ferredoxin oxidoreductase (pebB) (Prochlorococcus marinus (strain MIT 9215)).